Here is a 625-residue protein sequence, read N- to C-terminus: Phosphomethylpyrimidine synthase (625 aa).

Substrate is bound by residues Asn-230, Met-259, Tyr-288, His-324, 344–346, 385–388, and Glu-424; these read SRG and DGLR. His-428 contributes to the Zn(2+) binding site. Position 451 (Tyr-451) interacts with substrate. Residue His-492 coordinates Zn(2+). Positions 572, 575, and 580 each coordinate [4Fe-4S] cluster.

It belongs to the ThiC family. In terms of assembly, homodimer. The cofactor is [4Fe-4S] cluster.

It catalyses the reaction 5-amino-1-(5-phospho-beta-D-ribosyl)imidazole + S-adenosyl-L-methionine = 4-amino-2-methyl-5-(phosphooxymethyl)pyrimidine + CO + 5'-deoxyadenosine + formate + L-methionine + 3 H(+). It functions in the pathway cofactor biosynthesis; thiamine diphosphate biosynthesis. Its function is as follows. Catalyzes the synthesis of the hydroxymethylpyrimidine phosphate (HMP-P) moiety of thiamine from aminoimidazole ribotide (AIR) in a radical S-adenosyl-L-methionine (SAM)-dependent reaction. The chain is Phosphomethylpyrimidine synthase from Xanthomonas euvesicatoria pv. vesicatoria (strain 85-10) (Xanthomonas campestris pv. vesicatoria).